A 168-amino-acid polypeptide reads, in one-letter code: Urease accessory protein UreE (168 aa).

The interval 145–168 is disordered; sequence EGGAYAAGQGGGHGPHGQHTHPHH.

Belongs to the UreE family.

It is found in the cytoplasm. Involved in urease metallocenter assembly. Binds nickel. Probably functions as a nickel donor during metallocenter assembly. The chain is Urease accessory protein UreE from Verminephrobacter eiseniae (strain EF01-2).